Consider the following 485-residue polypeptide: Glutamate--tRNA ligase (485 aa).

Arg6 contacts L-glutamate. Residues 9 to 19 (PSPTGNLHIGT) carry the 'HIGH' region motif. L-glutamate-binding positions include Tyr192 and 210 to 214 (RGEDH). The 'KMSKS' region motif lies at 248-252 (KLSKR). Lys251 is a binding site for ATP.

This sequence belongs to the class-I aminoacyl-tRNA synthetase family. Glutamate--tRNA ligase type 1 subfamily. In terms of assembly, monomer. Does not require zinc. is required as a cofactor.

Its subcellular location is the cytoplasm. It catalyses the reaction tRNA(Glu) + L-glutamate + ATP = L-glutamyl-tRNA(Glu) + AMP + diphosphate. In terms of biological role, non-discriminating glutamyl-tRNA synthetase. Catalyzes the attachment of glutamate to tRNA(Glu) in a two-step reaction: glutamate is first activated by ATP to form Glu-AMP and then transferred to the acceptor end of tRNA(Glu). Acylates both tRNA(Glu) and tRNA(Gln) with glutamate, but has 13-fold higher efficiency with tRNA(Glu). This chain is Glutamate--tRNA ligase (gltX), found in Thermosynechococcus vestitus (strain NIES-2133 / IAM M-273 / BP-1).